The primary structure comprises 188 residues: Peptidyl-tRNA hydrolase (188 aa).

Y14 contacts tRNA. The active-site Proton acceptor is H19. TRNA contacts are provided by Y64, N66, and N113.

The protein belongs to the PTH family. In terms of assembly, monomer.

The protein resides in the cytoplasm. The enzyme catalyses an N-acyl-L-alpha-aminoacyl-tRNA + H2O = an N-acyl-L-amino acid + a tRNA + H(+). Functionally, hydrolyzes ribosome-free peptidyl-tRNAs (with 1 or more amino acids incorporated), which drop off the ribosome during protein synthesis, or as a result of ribosome stalling. Catalyzes the release of premature peptidyl moieties from peptidyl-tRNA molecules trapped in stalled 50S ribosomal subunits, and thus maintains levels of free tRNAs and 50S ribosomes. The polypeptide is Peptidyl-tRNA hydrolase (Chloroflexus aurantiacus (strain ATCC 29364 / DSM 637 / Y-400-fl)).